The sequence spans 164 residues: Protein-export protein SecB (164 aa).

This sequence belongs to the SecB family. In terms of assembly, homotetramer, a dimer of dimers. One homotetramer interacts with 1 SecA dimer.

It localises to the cytoplasm. Functionally, one of the proteins required for the normal export of preproteins out of the cell cytoplasm. It is a molecular chaperone that binds to a subset of precursor proteins, maintaining them in a translocation-competent state. It also specifically binds to its receptor SecA. This chain is Protein-export protein SecB, found in Orientia tsutsugamushi (strain Ikeda) (Rickettsia tsutsugamushi).